Reading from the N-terminus, the 34-residue chain is Brevinin-2GHa (34 aa).

A disulfide bond links Cys27 and Cys33.

Expressed by the skin glands.

The protein resides in the secreted. Its function is as follows. Antimicrobial peptide. Active against the Gram-positive bacteria S.aureus FDA209P (MIC=14.9 ug/ml) and B.subtilis ATCC 6633 (MIC&gt;64 ug/ml), but not active against the Gram-negative bacterium E.coli or the fungus C.albicans. This Sylvirana guentheri (Gunther's frog) protein is Brevinin-2GHa.